Reading from the N-terminus, the 495-residue chain is Putative aldehyde dehydrogenase AldA (495 aa).

212–218 contributes to the NAD(+) binding site; that stretch reads GKGSESG. Residues Glu256 and Cys290 contribute to the active site.

This sequence belongs to the aldehyde dehydrogenase family.

It carries out the reaction an aldehyde + NAD(+) + H2O = a carboxylate + NADH + 2 H(+). The chain is Putative aldehyde dehydrogenase AldA (aldA) from Staphylococcus aureus (strain MSSA476).